A 519-amino-acid chain; its full sequence is Cyclin-dependent kinase C-1 (519 aa).

One can recognise a Protein kinase domain in the interval Phe-25 to Phe-325. ATP is bound by residues Ile-31 to Val-39 and Lys-54. The residue at position 35 (Thr-35) is a Phosphothreonine. Tyr-36 carries the phosphotyrosine modification. The active-site Proton acceptor is Asp-164. Thr-198 bears the Phosphothreonine mark. Residues Ser-336–Thr-348 are compositionally biased toward basic and acidic residues. Positions Ser-336–Gln-519 are disordered. Gly residues predominate over residues Gly-426–Tyr-444. Residues Gly-445 to Arg-454 are compositionally biased toward low complexity. 2 stretches are compositionally biased toward gly residues: residues Gly-464–Ser-483 and Gly-490–Arg-499. A compositionally biased stretch (polar residues) spans Gln-505 to Gln-519.

It belongs to the protein kinase superfamily. CMGC Ser/Thr protein kinase family. CDC2/CDKX subfamily.

The enzyme catalyses L-seryl-[protein] + ATP = O-phospho-L-seryl-[protein] + ADP + H(+). The catalysed reaction is L-threonyl-[protein] + ATP = O-phospho-L-threonyl-[protein] + ADP + H(+). It catalyses the reaction [DNA-directed RNA polymerase] + ATP = phospho-[DNA-directed RNA polymerase] + ADP + H(+). The chain is Cyclin-dependent kinase C-1 (CDKC-1) from Oryza sativa subsp. japonica (Rice).